The following is a 279-amino-acid chain: Acetyl-coenzyme A carboxylase carboxyl transferase subunit beta (279 aa).

In terms of domain architecture, CoA carboxyltransferase N-terminal spans 23–279; sequence LWWKCEECGA…LTTLLSLMKL (257 aa). Positions 27, 30, 46, and 49 each coordinate Zn(2+). The segment at 27–49 adopts a C4-type zinc-finger fold; that stretch reads CEECGAALHKKQMEASDHTCPQC.

This sequence belongs to the AccD/PCCB family. In terms of assembly, acetyl-CoA carboxylase is a heterohexamer composed of biotin carboxyl carrier protein (AccB), biotin carboxylase (AccC) and two subunits each of ACCase subunit alpha (AccA) and ACCase subunit beta (AccD). The cofactor is Zn(2+).

It is found in the cytoplasm. It catalyses the reaction N(6)-carboxybiotinyl-L-lysyl-[protein] + acetyl-CoA = N(6)-biotinyl-L-lysyl-[protein] + malonyl-CoA. It functions in the pathway lipid metabolism; malonyl-CoA biosynthesis; malonyl-CoA from acetyl-CoA: step 1/1. Functionally, component of the acetyl coenzyme A carboxylase (ACC) complex. Biotin carboxylase (BC) catalyzes the carboxylation of biotin on its carrier protein (BCCP) and then the CO(2) group is transferred by the transcarboxylase to acetyl-CoA to form malonyl-CoA. The chain is Acetyl-coenzyme A carboxylase carboxyl transferase subunit beta from Chlorobium chlorochromatii (strain CaD3).